A 605-amino-acid polypeptide reads, in one-letter code: Leucine-rich repeat-containing protein 40 (605 aa).

The disordered stretch occupies residues 1-21; it reads MSRFKRGGKAPDPLSGFRAPK. LRR repeat units follow at residues 83–104, 106–127, 129–151, 152–173, 175–196, 198–219, 221–242, 244–265, 266–287, 290–311, 313–335, 336–357, 429–450, 453–475, 476–497, 499–520, 522–543, 546–567, and 569–590; these read DLTKLILASNKLQALSEDISLL, ALVVLDIHDNQIASLPCAIREL, NLQKLNISHNKIKQLPNELQHLQ, NLKSFLLQHNQLEELPDSIGHL, ILEELDVSNNCLRSVSSSVGQL, GLVKFNLSSNKLTALPTEIGKM, NLRQLDCTSNLLENVPASVAGM, SLEQLYLRQNKLTYLPELPFLT, KLKELHVGNNQIQTLGPEHLQN, SLSVLELRYNKLKVLPKEISLL, GLERLDLSNNDIGSLPDTLGSLP, NLKSLQLDGNPLRGIRRDILNK, PITTVNFSKNQLTEVPARIVEM, SVYDVNLGFNKISSISLNLCMLL, KLTHLDMRNNALASLPPEMEAL, RLQSIILSFNRFKHFPDVLYTI, NLETILISSNQIGSIDPIQLKK, KLSTLDLQNNDLLQIPPALGNC, and SLRALHLEGNPFRNPRATILAK.

The chain is Leucine-rich repeat-containing protein 40 (lrrc40) from Xenopus laevis (African clawed frog).